We begin with the raw amino-acid sequence, 89 residues long: Small ribosomal subunit protein uS15 (89 aa).

It belongs to the universal ribosomal protein uS15 family. In terms of assembly, part of the 30S ribosomal subunit. Forms a bridge to the 50S subunit in the 70S ribosome, contacting the 23S rRNA.

Functionally, one of the primary rRNA binding proteins, it binds directly to 16S rRNA where it helps nucleate assembly of the platform of the 30S subunit by binding and bridging several RNA helices of the 16S rRNA. Its function is as follows. Forms an intersubunit bridge (bridge B4) with the 23S rRNA of the 50S subunit in the ribosome. The polypeptide is Small ribosomal subunit protein uS15 (Jannaschia sp. (strain CCS1)).